The chain runs to 378 residues: Putative gustatory receptor 22f (378 aa).

Residues 1–13 (MKMFQPRRGFSCH) are Cytoplasmic-facing. A helical transmembrane segment spans residues 14–34 (LAWFMLQTTLYASWLLGLFPF). Over 35 to 48 (TFDSRRKQLKRSRW) the chain is Extracellular. A helical transmembrane segment spans residues 49–69 (LLLYGFVLHSLAMCLAMSSHL). Topologically, residues 70–88 (ASKQRRKYNAFERNPLLEK) are cytoplasmic. A helical membrane pass occupies residues 89–109 (IYMQFQVTTFFTISVLLLMNV). Residues 110 to 143 (WKSNTVRKIANELLTLEGQVKDLLTLKNCPNFNC) are Extracellular-facing. The chain crosses the membrane as a helical span at residues 144-164 (FVIKKHVAAIGQFVISIYFCL). Topologically, residues 165–178 (CQENSYPKILKILC) are cytoplasmic. The helical transmembrane segment at 179–199 (CLPSVGLQLIIMHFHTEIILV) threads the bilayer. Residues 200–245 (YRYVWLVNETLEDSHHLSSSRIHALASLYDRLLKLSELVVACNDLQ) are Extracellular-facing. A glycan (N-linked (GlcNAc...) asparagine) is linked at Asn-207. Residues 246–266 (LILMLIIYLIGNTVQIFFLIV) form a helical membrane-spanning segment. Residues 267 to 354 (LGVSMNKRYI…LCGLFSINHN (88 aa)) are Cytoplasmic-facing. The helical transmembrane segment at 355–375 (MGFQMIITSFLYLVYLLQFDF) threads the bilayer. Residues 376 to 378 (MNL) lie on the Extracellular side of the membrane.

It belongs to the insect chemoreceptor superfamily. Gustatory receptor (GR) family. Gr22e subfamily. In terms of tissue distribution, taste bristles in the foreleg and labial palps.

It localises to the cell membrane. Probable gustatory receptor which mediates acceptance or avoidance behavior, depending on its substrates. The polypeptide is Putative gustatory receptor 22f (Gr22f) (Drosophila melanogaster (Fruit fly)).